A 219-amino-acid polypeptide reads, in one-letter code: Small ribosomal subunit protein uS3 (219 aa).

The region spanning 38-106 (VRKFVKTKLQ…QVAVNIVEVK (69 aa)) is the KH type-2 domain.

It belongs to the universal ribosomal protein uS3 family. Part of the 30S ribosomal subunit. Forms a tight complex with proteins S10 and S14.

Functionally, binds the lower part of the 30S subunit head. Binds mRNA in the 70S ribosome, positioning it for translation. This chain is Small ribosomal subunit protein uS3, found in Desulfitobacterium hafniense (strain DSM 10664 / DCB-2).